Consider the following 202-residue polypeptide: Tumor necrosis factor alpha-induced protein 8-like protein 3 (202 aa).

The span at 1–10 (MDTDSGDLSE) shows a compositional bias: acidic residues. The segment at 1–24 (MDTDSGDLSEGELSPGPEQFSSKS) is disordered.

The protein belongs to the TNFAIP8 family.

It localises to the cytoplasm. Its subcellular location is the cell membrane. In terms of biological role, may act as a lipid transfer protein. The polypeptide is Tumor necrosis factor alpha-induced protein 8-like protein 3 (tnfaip8l3) (Xenopus laevis (African clawed frog)).